Reading from the N-terminus, the 706-residue chain is Choline transporter-like protein 2 (706 aa).

The Cytoplasmic portion of the chain corresponds to 1–32 (MMELEGEKPNYGEPRKYDPTFKGPIYNRGCTD). A helical transmembrane segment spans residues 33 to 53 (IVCCIFFIICILGYVAVGILA). Topologically, residues 54-232 (WSQGDPRKVI…KIFEDYTQSW (179 aa)) are extracellular. N-linked (GlcNAc...) asparagine glycans are attached at residues N187 and N210. The chain crosses the membrane as a helical span at residues 233-253 (YWILIGLVIAMLISLLFIVLL). Residues 254–256 (RFL) are Cytoplasmic-facing. Residues 257–277 (AGIMVWVMIVMVILVIGYGIF) traverse the membrane as a helical segment. Residues 278 to 315 (HCSMEYVSLKSEAGSNVTLKDLGFQTDFSVYLHIRQTW) lie on the Extracellular side of the membrane. A glycan (N-linked (GlcNAc...) asparagine) is linked at N293. Residues 316–336 (LAFIIILAIVEVVIILLLIFL) traverse the membrane as a helical segment. Over 337 to 364 (RNRILIAIALIKEASRAIGYVMSALFYP) the chain is Cytoplasmic. Residues 365 to 385 (LFTFALLSIVIAYWAVTAVFL) form a helical membrane-spanning segment. The Extracellular portion of the chain corresponds to 386–454 (STSNQPIYKV…LQFYNVFLFF (69 aa)). N-linked (GlcNAc...) asparagine glycans are attached at residues N397 and N412. The chain crosses the membrane as a helical span at residues 455–477 (WCANFVTALGQMTLAGAFASYYW). Residues 478 to 504 (ALVKPDDMPAFPIFSSLGRSLRYHTGS) lie on the Cytoplasmic side of the membrane. A helical membrane pass occupies residues 505 to 525 (LAFGSLILSIIQIIRVLLEYI). At 526-599 (DHKLQGTQNK…RVAVLDKVTD (74 aa)) the chain is on the extracellular side. A helical membrane pass occupies residues 600 to 620 (FLLFLGKLLIVGLVGIFAFFF). Over 621–638 (FSGRVKAFENTAPNLHYY) the chain is Cytoplasmic. A helical membrane pass occupies residues 639 to 659 (WVPILTVVVGSYLIAHGFFSV). The Extracellular segment spans residues 660 to 706 (YAMCVDTLFLCFLEDLERNDGSAERPYLMSDRLLKVLNKKNKPEPAE).

This sequence belongs to the CTL (choline transporter-like) family.

The protein resides in the cell membrane. It localises to the mitochondrion outer membrane. The enzyme catalyses choline(out) + n H(+)(in) = choline(in) + n H(+)(out). It carries out the reaction ethanolamine(out) + n H(+)(in) = ethanolamine(in) + n H(+)(out). In terms of biological role, choline/H+ antiporter, mainly in mitochodria. Also acts as a low-affinity ethanolamine/H+ antiporter, regulating the supply of extracellular ethanolamine (Etn) for the CDP-Etn pathway, redistribute intracellular Etn and balance the CDP-Cho and CDP-Etn arms of the Kennedy pathway. The protein is Choline transporter-like protein 2 (slc44a2) of Salmo salar (Atlantic salmon).